The sequence spans 141 residues: Hemoglobin subunit alpha (141 aa).

In terms of domain architecture, Globin spans 1–141 (VLSPTDKTNV…VSTVLTSKYR (141 aa)). The residue at position 3 (serine 3) is a Phosphoserine. Lysine 7 is subject to N6-succinyllysine. Threonine 8 is subject to Phosphothreonine. Lysine 11 is subject to N6-succinyllysine. Tyrosine 24 bears the Phosphotyrosine mark. Phosphoserine is present on serine 35. N6-succinyllysine is present on lysine 40. At serine 49 the chain carries Phosphoserine. Histidine 58 lines the O2 pocket. Histidine 87 provides a ligand contact to heme b. Serine 102 carries the post-translational modification Phosphoserine. Threonine 108 bears the Phosphothreonine mark. Serine 124 is subject to Phosphoserine. Phosphothreonine occurs at positions 134 and 137. Phosphoserine is present on serine 138.

The protein belongs to the globin family. Heterotetramer of two alpha chains and two beta chains. As to expression, red blood cells.

In terms of biological role, involved in oxygen transport from the lung to the various peripheral tissues. Functionally, hemopressin acts as an antagonist peptide of the cannabinoid receptor CNR1. Hemopressin-binding efficiently blocks cannabinoid receptor CNR1 and subsequent signaling. This is Hemoglobin subunit alpha (HBA) from Rhinoceros unicornis (Greater Indian rhinoceros).